Consider the following 119-residue polypeptide: Aspartate 1-decarboxylase (119 aa).

S25 (schiff-base intermediate with substrate; via pyruvic acid) is an active-site residue. S25 carries the pyruvic acid (Ser) modification. T57 contacts substrate. Y58 serves as the catalytic Proton donor. 73–75 (GAA) provides a ligand contact to substrate.

This sequence belongs to the PanD family. Heterooctamer of four alpha and four beta subunits. It depends on pyruvate as a cofactor. In terms of processing, is synthesized initially as an inactive proenzyme, which is activated by self-cleavage at a specific serine bond to produce a beta-subunit with a hydroxyl group at its C-terminus and an alpha-subunit with a pyruvoyl group at its N-terminus.

The protein localises to the cytoplasm. It catalyses the reaction L-aspartate + H(+) = beta-alanine + CO2. It functions in the pathway cofactor biosynthesis; (R)-pantothenate biosynthesis; beta-alanine from L-aspartate: step 1/1. In terms of biological role, catalyzes the pyruvoyl-dependent decarboxylation of aspartate to produce beta-alanine. The chain is Aspartate 1-decarboxylase from Ruthia magnifica subsp. Calyptogena magnifica.